The sequence spans 373 residues: Flagellar P-ring protein 1 (373 aa).

An N-terminal signal peptide occupies residues 1 to 25 (MKPINTFFSSFLLALTLGLPATSQA).

The protein belongs to the FlgI family. As to quaternary structure, the basal body constitutes a major portion of the flagellar organelle and consists of four rings (L,P,S, and M) mounted on a central rod.

It is found in the periplasm. It localises to the bacterial flagellum basal body. In terms of biological role, assembles around the rod to form the L-ring and probably protects the motor/basal body from shearing forces during rotation. This chain is Flagellar P-ring protein 1, found in Vibrio parahaemolyticus serotype O3:K6 (strain RIMD 2210633).